The following is a 343-amino-acid chain: GTP 3',8-cyclase (343 aa).

A Radical SAM core domain is found at 19–244; it reads PFGRNISYLR…TDLDDSTGGP (226 aa). Residue arginine 28 participates in GTP binding. 2 residues coordinate [4Fe-4S] cluster: cysteine 35 and cysteine 39. Tyrosine 41 contacts S-adenosyl-L-methionine. Cysteine 42 lines the [4Fe-4S] cluster pocket. GTP is bound at residue arginine 77. S-adenosyl-L-methionine is bound at residue glycine 81. Threonine 111 is a binding site for GTP. Serine 135 is a binding site for S-adenosyl-L-methionine. Lysine 171 contributes to the GTP binding site. S-adenosyl-L-methionine is bound at residue methionine 205. Residues cysteine 268 and cysteine 271 each coordinate [4Fe-4S] cluster. Residue 273-275 coordinates GTP; that stretch reads RVR. Cysteine 285 serves as a coordination point for [4Fe-4S] cluster.

Belongs to the radical SAM superfamily. MoaA family. In terms of assembly, monomer and homodimer. Requires [4Fe-4S] cluster as cofactor.

The enzyme catalyses GTP + AH2 + S-adenosyl-L-methionine = (8S)-3',8-cyclo-7,8-dihydroguanosine 5'-triphosphate + 5'-deoxyadenosine + L-methionine + A + H(+). It participates in cofactor biosynthesis; molybdopterin biosynthesis. Functionally, catalyzes the cyclization of GTP to (8S)-3',8-cyclo-7,8-dihydroguanosine 5'-triphosphate. This Nitrobacter winogradskyi (strain ATCC 25391 / DSM 10237 / CIP 104748 / NCIMB 11846 / Nb-255) protein is GTP 3',8-cyclase.